The sequence spans 313 residues: Homoserine O-acetyltransferase (313 aa).

Cys-142 serves as the catalytic Acyl-thioester intermediate. Lys-163 and Ser-191 together coordinate substrate. His-234 serves as the catalytic Proton acceptor. Glu-236 is a catalytic residue. Arg-248 lines the substrate pocket.

The protein belongs to the MetA family.

The protein localises to the cytoplasm. The enzyme catalyses L-homoserine + acetyl-CoA = O-acetyl-L-homoserine + CoA. It functions in the pathway amino-acid biosynthesis; L-methionine biosynthesis via de novo pathway; O-acetyl-L-homoserine from L-homoserine: step 1/1. Transfers an acetyl group from acetyl-CoA to L-homoserine, forming acetyl-L-homoserine. The protein is Homoserine O-acetyltransferase of Streptococcus gordonii (strain Challis / ATCC 35105 / BCRC 15272 / CH1 / DL1 / V288).